The sequence spans 350 residues: MKTQLKGDRVLAEKEAVAEFYKTGYFGRPKGEGLELSLVEAAFLLSRGKLEIELEGTMLDFRYFFEQASLRQPNFELKYIVYKDLKERGYYVQPSAADFRVYPRGSHPGKSAARIFVHVQSERQLLPVKLLQDSVISAENVHKQFILAVVDEESDLTFYEVKTAVPKGEMTEPYPAIKTDATFLEDRVIAWDAQASETLYKRGFYGKMLDSERLQLSLVESLYLFSRGIITVRDRKGKVFSFDEFIEKASEIESFFLRKYSAYKNLRDSGHVVKTGFKFGTNFRVYRKVESIEKIPHSEYLVNAIPADFEFRLSVMSGAVRLANSVRKKMLFAVEKDEEIEYLDISRTKM.

Active-site residues include Tyr286, His297, and Lys328.

Belongs to the tRNA-intron endonuclease family. Archaeal long subfamily. As to quaternary structure, homodimer.

The catalysed reaction is pretRNA = a 3'-half-tRNA molecule with a 5'-OH end + a 5'-half-tRNA molecule with a 2',3'-cyclic phosphate end + an intron with a 2',3'-cyclic phosphate and a 5'-hydroxyl terminus.. Its function is as follows. Endonuclease that removes tRNA introns. Cleaves pre-tRNA at the 5'- and 3'-splice sites to release the intron. The products are an intron and two tRNA half-molecules bearing 2',3' cyclic phosphate and 5'-OH termini. Recognizes a pseudosymmetric substrate in which 2 bulged loops of 3 bases are separated by a stem of 4 bp. In Methanosarcina barkeri (strain Fusaro / DSM 804), this protein is tRNA-splicing endonuclease.